The following is a 454-amino-acid chain: Laccase-3 (454 aa).

2 Plastocyanin-like domains span residues 1-95 (PGPT…GPAT) and 101-252 (DLGV…YSGA). Asn24 carries N-linked (GlcNAc...) asparagine glycosylation. Cu cation-binding residues include His29, His31, His73, and His75. 5 N-linked (GlcNAc...) asparagine glycosylation sites follow: Asn138, Asn169, Asn218, Asn314, and Asn334. One can recognise a Plastocyanin-like 3 domain in the interval 319–454 (DVDWKKPILQ…SEGLAVQFQG (136 aa)). Residues His375, His378, and His380 each contribute to the Cu cation site. Asn395 carries N-linked (GlcNAc...) asparagine glycosylation. Positions 437, 438, 439, and 443 each coordinate Cu cation.

This sequence belongs to the multicopper oxidase family. Cu cation is required as a cofactor.

It is found in the secreted. It catalyses the reaction 4 hydroquinone + O2 = 4 benzosemiquinone + 2 H2O. Its function is as follows. Lignin degradation and detoxification of lignin-derived products. The polypeptide is Laccase-3 (lcc3) (Botryotinia fuckeliana (Noble rot fungus)).